We begin with the raw amino-acid sequence, 427 residues long: Terminal nucleotidyltransferase 5B (427 aa).

The tract at residues 1–49 is disordered; it reads MMPSESGAESLEQPAAQVGTGAASAVATAGAAGGGPDPEASSASLGRHQ. Residues 15-30 are compositionally biased toward low complexity; sequence AAQVGTGAASAVATAG.

Belongs to the TENT family.

The protein localises to the cytoplasm. It is found in the nucleus. The enzyme catalyses RNA(n) + ATP = RNA(n)-3'-adenine ribonucleotide + diphosphate. Functionally, catalyzes the transfer of one adenosine molecule from an ATP to an mRNA poly(A) tail bearing a 3'-OH terminal group in an ATP hydrolysis-dependent manner. May be involved in maintaining the translation efficiency of at least some genes through preventing degradation of their mRNAs. Prefers RNA molecules that are adenosine-rich close to 3'-end. In addition, may inhibit cell proliferation and cell cycle progression through ubiquitination of beta-catenin/CTNNB1. This chain is Terminal nucleotidyltransferase 5B, found in Mus musculus (Mouse).